The following is an 804-amino-acid chain: Phenylalanine--tRNA ligase beta subunit (804 aa).

Positions 38–148 (RSSLKGFVIA…EDAPIGGLFA (111 aa)) constitute a tRNA-binding domain. Positions 401–476 (PEIKQIAFPF…RIYGLDKIEP (76 aa)) constitute a B5 domain. Mg(2+)-binding residues include Asp454, Asp460, Glu463, and Glu464. The FDX-ACB domain occupies 710–803 (SPFQMVRRDF…VTKATGAYLR (94 aa)).

The protein belongs to the phenylalanyl-tRNA synthetase beta subunit family. Type 1 subfamily. As to quaternary structure, tetramer of two alpha and two beta subunits. Mg(2+) serves as cofactor.

It is found in the cytoplasm. It catalyses the reaction tRNA(Phe) + L-phenylalanine + ATP = L-phenylalanyl-tRNA(Phe) + AMP + diphosphate + H(+). The sequence is that of Phenylalanine--tRNA ligase beta subunit from Bartonella quintana (strain Toulouse) (Rochalimaea quintana).